A 123-amino-acid chain; its full sequence is Thioredoxin H-type (123 aa).

The region spanning 2–119 (AATAELIPAG…IEAKLLKHSQ (118 aa)) is the Thioredoxin domain. A disulfide bond links cysteine 45 and cysteine 48.

The protein belongs to the thioredoxin family. Plant H-type subfamily.

It localises to the cytoplasm. Functionally, participates in various redox reactions through the reversible oxidation of the active center dithiol to a disulfide. The H form is known to activate a number of cytosolic enzymes. This Brassica campestris (Field mustard) protein is Thioredoxin H-type (PEC-2).